A 263-amino-acid polypeptide reads, in one-letter code: Insulin-like growth factor-binding protein 1 (263 aa).

The N-terminal stretch at 1–25 is a signal peptide; that stretch reads MPEVLAVRAWPLLLSLAVQLGATVG. The IGFBP N-terminal domain occupies 28–109; the sequence is QPWRCAPCSA…TRGQGACMTT (82 aa). Cystine bridges form between cysteine 32–cysteine 59, cysteine 35–cysteine 61, cysteine 43–cysteine 62, cysteine 50–cysteine 65, cysteine 73–cysteine 86, and cysteine 80–cysteine 106. The disordered stretch occupies residues 102–131; the sequence is GQGACMTTPSDEATDTKDTTSPENVSPESS. Phosphoserine is present on residues serine 122, serine 127, serine 130, serine 148, and serine 160. Residues 122-131 are compositionally biased toward polar residues; that stretch reads SPENVSPESS. Tyrosine 162 carries the phosphotyrosine modification. In terms of domain architecture, Thyroglobulin type-1 spans 177–255; that stretch reads KEPCQRELYK…SVAVRGDPKC (79 aa). Cystine bridges form between cysteine 180–cysteine 210, cysteine 221–cysteine 232, and cysteine 234–cysteine 255. Serine 246 bears the Phosphoserine mark. A Cell attachment site motif is present at residues 250 to 252; the sequence is RGD.

In terms of assembly, binds equally well IGF1 and IGF2. Interacts with integrin ITGA5:ITGB1. Interacts with VHL; this interaction inhibits HIF1A degradation.

The protein resides in the secreted. Its function is as follows. Multifunctional protein that plays a critical role in regulating the availability of IGFs such as IGF1 and IGF2 to their receptors and thereby regulates IGF-mediated cellular processes including cell migration, proliferation, differentiation or apoptosis in a cell-type specific manner. Also plays a positive role in cell migration by interacting with integrin ITGA5:ITGB1 through its RGD motif. Mechanistically, binding to integrins leads to activation of focal adhesion kinase/PTK2 and stimulation of the mitogen-activated protein kinase (MAPK) pathway. Regulates cardiomyocyte apoptosis by suppressing HIF-1alpha/HIF1A degradation through ubiquitination. This is Insulin-like growth factor-binding protein 1 (IGFBP1) from Bos taurus (Bovine).